A 37-amino-acid polypeptide reads, in one-letter code: Large ribosomal subunit protein bL36B (37 aa).

This sequence belongs to the bacterial ribosomal protein bL36 family.

The polypeptide is Large ribosomal subunit protein bL36B (Saccharopolyspora erythraea (strain ATCC 11635 / DSM 40517 / JCM 4748 / NBRC 13426 / NCIMB 8594 / NRRL 2338)).